Here is a 255-residue protein sequence, read N- to C-terminus: Type III pantothenate kinase (255 aa).

6–13 (DIGNSNIV) contributes to the ATP binding site. Substrate is bound by residues tyrosine 100 and 107–110 (GSDR). Aspartate 109 functions as the Proton acceptor in the catalytic mechanism. Aspartate 129 serves as a coordination point for K(+). Threonine 132 provides a ligand contact to ATP. Threonine 184 lines the substrate pocket.

It belongs to the type III pantothenate kinase family. Homodimer. Requires NH4(+) as cofactor. It depends on K(+) as a cofactor.

It is found in the cytoplasm. The enzyme catalyses (R)-pantothenate + ATP = (R)-4'-phosphopantothenate + ADP + H(+). The protein operates within cofactor biosynthesis; coenzyme A biosynthesis; CoA from (R)-pantothenate: step 1/5. Its function is as follows. Catalyzes the phosphorylation of pantothenate (Pan), the first step in CoA biosynthesis. In Brevibacillus brevis (strain 47 / JCM 6285 / NBRC 100599), this protein is Type III pantothenate kinase.